The primary structure comprises 376 residues: Succinate--CoA ligase [ADP-forming] subunit beta (376 aa).

Positions 9 to 234 (KAIAKKYGIP…ERELSELEKE (226 aa)) constitute an ATP-grasp domain. ATP-binding positions include Lys45, 52–54 (GRG), Glu91, Glu94, and Glu99. Asn191 and Asp204 together coordinate Mg(2+). Residues Asn254 and 311 to 313 (GIT) each bind substrate.

It belongs to the succinate/malate CoA ligase beta subunit family. As to quaternary structure, heterotetramer of two alpha and two beta subunits. Mg(2+) is required as a cofactor.

The catalysed reaction is succinate + ATP + CoA = succinyl-CoA + ADP + phosphate. It catalyses the reaction GTP + succinate + CoA = succinyl-CoA + GDP + phosphate. It participates in carbohydrate metabolism; tricarboxylic acid cycle; succinate from succinyl-CoA (ligase route): step 1/1. Its function is as follows. Succinyl-CoA synthetase functions in the citric acid cycle (TCA), coupling the hydrolysis of succinyl-CoA to the synthesis of either ATP or GTP and thus represents the only step of substrate-level phosphorylation in the TCA. The beta subunit provides nucleotide specificity of the enzyme and binds the substrate succinate, while the binding sites for coenzyme A and phosphate are found in the alpha subunit. In Ignicoccus hospitalis (strain KIN4/I / DSM 18386 / JCM 14125), this protein is Succinate--CoA ligase [ADP-forming] subunit beta.